A 107-amino-acid polypeptide reads, in one-letter code: Small ribosomal subunit protein eS25 (107 aa).

A disordered region spans residues 1–35; that stretch reads MPPKQQLSKAAKAAAAMAGGKKSKKKWSKKSHKDK. The segment covering 8–20 has biased composition (low complexity); the sequence is SKAAKAAAAMAGG. Residues 21–35 are compositionally biased toward basic residues; that stretch reads KKSKKKWSKKSHKDK.

Belongs to the eukaryotic ribosomal protein eS25 family.

This Candida glabrata (strain ATCC 2001 / BCRC 20586 / JCM 3761 / NBRC 0622 / NRRL Y-65 / CBS 138) (Yeast) protein is Small ribosomal subunit protein eS25 (RPS25).